Here is a 678-residue protein sequence, read N- to C-terminus: Sulfoquinovosidase (678 aa).

The a 6-sulfo-alpha-D-quinovosyldiacylglycerol site is built by Q288, R301, V302, and W304. The active-site Nucleophile is D405. E408 is an active-site residue. D472 functions as the Proton donor in the catalytic mechanism. H537 provides a ligand contact to a 6-sulfo-alpha-D-quinovosyldiacylglycerol.

Belongs to the glycosyl hydrolase 31 family.

The catalysed reaction is a 6-sulfo-alpha-D-quinovosyldiacylglycerol + H2O = 6-sulfo-alpha-D-quinovose + a 1,2-diacyl-sn-glycerol. It carries out the reaction 3-(6-sulfo-alpha-D-quinovosyl)glycerol + H2O = 6-sulfo-alpha-D-quinovose + glycerol. The protein operates within glycolipid metabolism. Its activity is regulated as follows. Is inactivated in vitro by the mechanism-based inactivator 5-fluoro-beta-L-idopyranosyl fluoride (5FIdoF) that yields a covalent glycosyl-enzyme complex with the active site nucleophile Asp-405. Catalyzes the hydrolysis of sulfoquinovosyl diacylglycerides (SQDG) to sulfoquinovose (SQ), which is then degraded by E.coli through the SQ Embden-Meyerhof-Parnas (SQ-EMP) sulfoglycolysis pathway as a source of carbon and sulfur. Therefore, is likely involved in the utilization of the sulfoquinovose headgroup found in ubiquitous plant sulfolipids. Is also able to hydrolyze simple sulfoquinovosides such as sulfoquinovosyl glycerol (SQGro). In vitro, can use the substrate analog para-nitrophenyl alpha-sulfoquinovoside (PNPSQ), but shows no detectable activity toward 4-nitrophenyl alpha-D-glucopyranoside (PNPGlc). Is a retaining glycoside hydrolase, since it forms the alpha anomer of SQ. Also exhibits some alpha-glucosidase activity against alpha-glucosyl fluoride in vitro, although natural substrates, such as alpha-glucobioses are scarcely hydrolyzed. This Escherichia coli (strain K12) protein is Sulfoquinovosidase.